Here is a 198-residue protein sequence, read N- to C-terminus: Putative mycofactocin biosynthesis transcriptional regulator MftR (198 aa).

Positions 12–72 (STTPHHISDV…GDFSTHLAQL (61 aa)) constitute an HTH tetR-type domain. A DNA-binding region (H-T-H motif) is located at residues 35–54 (SVDDIARAAGIARRTLFRYY).

Its function is as follows. May regulate a gene cluster involved in mycofactocin expression. Mycofactocin is a conserved polypeptide that might serve as an electron carrier. This Mycobacterium tuberculosis (strain ATCC 25618 / H37Rv) protein is Putative mycofactocin biosynthesis transcriptional regulator MftR (mftR).